Consider the following 1323-residue polypeptide: Phosphoribosylformylglycinamidine synthase (1323 aa).

ATP is bound by residues 312 to 323 (GAATGSGGEIRD), 391 to 393 (NGY), and alanine 691. Residues aspartate 692, glutamate 733, asparagine 737, and aspartate 903 each contribute to the Mg(2+) site. Serine 905 contributes to the ATP binding site. Residues 1062–1306 (VAILREQGVN…YPHSKASEWG (245 aa)) enclose the Glutamine amidotransferase type-1 domain. Cysteine 1156 functions as the Nucleophile in the catalytic mechanism. Active-site residues include histidine 1284 and glutamate 1286.

It in the N-terminal section; belongs to the FGAMS family.

Its subcellular location is the cytoplasm. It catalyses the reaction N(2)-formyl-N(1)-(5-phospho-beta-D-ribosyl)glycinamide + L-glutamine + ATP + H2O = 2-formamido-N(1)-(5-O-phospho-beta-D-ribosyl)acetamidine + L-glutamate + ADP + phosphate + H(+). Its pathway is purine metabolism; IMP biosynthesis via de novo pathway; 5-amino-1-(5-phospho-D-ribosyl)imidazole from N(2)-formyl-N(1)-(5-phospho-D-ribosyl)glycinamide: step 1/2. Functionally, phosphoribosylformylglycinamidine synthase involved in the purines biosynthetic pathway. Catalyzes the ATP-dependent conversion of formylglycinamide ribonucleotide (FGAR) and glutamine to yield formylglycinamidine ribonucleotide (FGAM) and glutamate. This is Phosphoribosylformylglycinamidine synthase (ade3) from Schizosaccharomyces pombe (strain 972 / ATCC 24843) (Fission yeast).